A 352-amino-acid chain; its full sequence is Protein-glutamate methylesterase/protein-glutamine glutaminase (352 aa).

One can recognise a Response regulatory domain in the interval 5–123 (RILIVDDSVI…SKEKAIEYIR (119 aa)). At D56 the chain carries 4-aspartylphosphate. Residues 166-352 (EIVAIGVSTG…LAEEIIRRIG (187 aa)) form the CheB-type methylesterase domain. Residues S173, H200, and D296 contribute to the active site.

It belongs to the CheB family. In terms of processing, phosphorylated by CheA. Phosphorylation of the N-terminal regulatory domain activates the methylesterase activity.

Its subcellular location is the cytoplasm. The enzyme catalyses [protein]-L-glutamate 5-O-methyl ester + H2O = L-glutamyl-[protein] + methanol + H(+). It catalyses the reaction L-glutaminyl-[protein] + H2O = L-glutamyl-[protein] + NH4(+). Functionally, involved in chemotaxis. Part of a chemotaxis signal transduction system that modulates chemotaxis in response to various stimuli. Catalyzes the demethylation of specific methylglutamate residues introduced into the chemoreceptors (methyl-accepting chemotaxis proteins or MCP) by CheR. Also mediates the irreversible deamidation of specific glutamine residues to glutamic acid. This chain is Protein-glutamate methylesterase/protein-glutamine glutaminase, found in Trichodesmium erythraeum (strain IMS101).